A 398-amino-acid chain; its full sequence is Aspartate aminotransferase (398 aa).

L-aspartate is bound by residues G36, W132, and N185. K248 carries the N6-(pyridoxal phosphate)lysine modification. R376 contacts L-aspartate.

Belongs to the class-I pyridoxal-phosphate-dependent aminotransferase family. Homodimer. Pyridoxal 5'-phosphate is required as a cofactor.

The protein resides in the cytoplasm. It carries out the reaction L-aspartate + 2-oxoglutarate = oxaloacetate + L-glutamate. The chain is Aspartate aminotransferase (aspC) from Pseudomonas aeruginosa (strain ATCC 15692 / DSM 22644 / CIP 104116 / JCM 14847 / LMG 12228 / 1C / PRS 101 / PAO1).